A 321-amino-acid polypeptide reads, in one-letter code: Peptidase 1 (321 aa).

Positions 1–18 are cleaved as a signal peptide; it reads MKFVLAIASLLVLSTVYA. Residues 19–98 constitute a propeptide, activation peptide; sequence RPASIKTFEE…LKTQFDLNAE (80 aa). Intrachain disulfides connect cysteine 102–cysteine 216, cysteine 130–cysteine 170, and cysteine 164–cysteine 202. Residue cysteine 133 is part of the active site. Asparagine 151 is a glycosylation site (N-linked (GlcNAc...) asparagine). Catalysis depends on residues histidine 269 and arginine 288.

It belongs to the peptidase C1 family. As to quaternary structure, monomer.

The protein resides in the secreted. It carries out the reaction Broad endopeptidase specificity.. In terms of biological role, thiol protease that hydrolyzes proteins, with a preference for Phe or basic residues. The sequence is that of Peptidase 1 (DERF1) from Dermatophagoides farinae (American house dust mite).